We begin with the raw amino-acid sequence, 470 residues long: Homogentisate 1,2-dioxygenase (470 aa).

Positions 356, 362, and 392 each coordinate Fe cation.

The protein belongs to the homogentisate dioxygenase family. It depends on Fe cation as a cofactor.

It carries out the reaction homogentisate + O2 = 4-maleylacetoacetate + H(+). Its pathway is amino-acid degradation; L-phenylalanine degradation; acetoacetate and fumarate from L-phenylalanine: step 4/6. This chain is Homogentisate 1,2-dioxygenase (HGO), found in Oryza sativa subsp. japonica (Rice).